The following is a 251-amino-acid chain: DNA repair protein RecO (251 aa).

The protein belongs to the RecO family.

Functionally, involved in DNA repair and RecF pathway recombination. The protein is DNA repair protein RecO of Streptococcus mutans serotype c (strain ATCC 700610 / UA159).